Reading from the N-terminus, the 118-residue chain is uncharacterized protein (118 aa).

Transmembrane regions (helical) follow at residues 7 to 27 (VIVK…FIIE) and 34 to 58 (VFVA…AIIF).

The protein localises to the membrane. This is an uncharacterized protein from Saccharomyces cerevisiae (strain ATCC 204508 / S288c) (Baker's yeast).